A 110-amino-acid polypeptide reads, in one-letter code: Large ribosomal subunit protein uL24 (110 aa).

Belongs to the universal ribosomal protein uL24 family. As to quaternary structure, part of the 50S ribosomal subunit.

In terms of biological role, one of two assembly initiator proteins, it binds directly to the 5'-end of the 23S rRNA, where it nucleates assembly of the 50S subunit. Its function is as follows. One of the proteins that surrounds the polypeptide exit tunnel on the outside of the subunit. The chain is Large ribosomal subunit protein uL24 from Roseiflexus sp. (strain RS-1).